The sequence spans 185 residues: Ribose 1,5-bisphosphate phosphokinase PhnN (185 aa).

10 to 17 (GPSGSGKD) is a binding site for ATP.

Belongs to the ribose 1,5-bisphosphokinase family.

The catalysed reaction is alpha-D-ribose 1,5-bisphosphate + ATP = 5-phospho-alpha-D-ribose 1-diphosphate + ADP. It functions in the pathway metabolic intermediate biosynthesis; 5-phospho-alpha-D-ribose 1-diphosphate biosynthesis; 5-phospho-alpha-D-ribose 1-diphosphate from D-ribose 5-phosphate (route II): step 3/3. In terms of biological role, catalyzes the phosphorylation of ribose 1,5-bisphosphate to 5-phospho-D-ribosyl alpha-1-diphosphate (PRPP). The sequence is that of Ribose 1,5-bisphosphate phosphokinase PhnN from Shigella dysenteriae serotype 1 (strain Sd197).